We begin with the raw amino-acid sequence, 561 residues long: DNA ligase B (561 aa).

The active-site N6-AMP-lysine intermediate is the lysine 125.

The protein belongs to the NAD-dependent DNA ligase family. LigB subfamily.

The enzyme catalyses NAD(+) + (deoxyribonucleotide)n-3'-hydroxyl + 5'-phospho-(deoxyribonucleotide)m = (deoxyribonucleotide)n+m + AMP + beta-nicotinamide D-nucleotide.. Catalyzes the formation of phosphodiester linkages between 5'-phosphoryl and 3'-hydroxyl groups in double-stranded DNA using NAD as a coenzyme and as the energy source for the reaction. The sequence is that of DNA ligase B from Salmonella schwarzengrund (strain CVM19633).